Here is a 265-residue protein sequence, read N- to C-terminus: MRIGRIASPDGVAFASIDGELGEPSEMTAREIAEHPFGTPTFTGRSWPLADVRLLAPILASKVVCVGKNYADHIAEMGGRPPADPVIFLKPNTAIIGPNTPIRLPANASPVHFEGELAIVIGRACKDVPAAQAVDNILGYTIGNDVSARDQQQSDGQWTRAKGHDTFCPVGPWIVTDLAPFDPADLELRTVVNGDVKQHARTSLMIHDIGAIVEWISAIMTLLPGDLILTGTPAGVGPIEDGDTVSITIEGIGTLTNPVVRKGKP.

3 residues coordinate a divalent metal cation: Glu-114, Glu-116, and Asp-145.

This sequence in the C-terminal section; belongs to the FAH family. A divalent metal cation is required as a cofactor.

This is Protein Rv2993c from Mycobacterium tuberculosis (strain ATCC 25618 / H37Rv).